The sequence spans 123 residues: Protein Wnt-3a (123 aa).

Ser-1 carries the O-palmitoleoyl serine lipid modification. Cys-89 and Cys-104 form a disulfide bridge. Asn-90 carries N-linked (GlcNAc...) asparagine glycosylation.

This sequence belongs to the Wnt family. Disulfide bonds have critical and distinct roles in secretion and activity. Loss of each conserved cysteine results in high molecular weight oxidized Wnt oligomers, which are formed through inter-Wnt disulfide bonding. In terms of processing, palmitoleoylation is required for efficient binding to frizzled receptors. Depalmitoleoylation leads to Wnt signaling pathway inhibition.

Its subcellular location is the secreted. It is found in the extracellular space. The protein resides in the extracellular matrix. Its function is as follows. Ligand for members of the frizzled family of seven transmembrane receptors. Functions in the canonical Wnt signaling pathway that results in activation of transcription factors of the TCF/LEF family. Required for normal embryonic mesoderm development and formation of caudal somites. Required for normal morphogenesis of the developing neural tube. The polypeptide is Protein Wnt-3a (WNT-3A) (Alopias vulpinus (Common thresher shark)).